We begin with the raw amino-acid sequence, 207 residues long: Alpha-1-acid glycoprotein 1 (207 aa).

A signal peptide spans 1–18 (MALHTVLIILSLLPMLEA). Q19 carries the post-translational modification Pyrrolidone carboxylic acid. N-linked (GlcNAc...) asparagine glycans are attached at residues N25, N34, N76, N94, and N104. A disulfide bond links C91 and C184.

It belongs to the calycin superfamily. Lipocalin family.

The protein resides in the secreted. Its function is as follows. Functions as a transport protein in the blood stream. Binds various ligands in the interior of its beta-barrel domain. Appears to function in modulating the activity of the immune system during the acute-phase reaction. This chain is Alpha-1-acid glycoprotein 1 (Orm1), found in Mus musculus (Mouse).